A 175-amino-acid chain; its full sequence is Adenylyl-sulfate kinase (175 aa).

Position 12 to 19 (12 to 19 (GLSGAGKT)) interacts with ATP. Residue Ser-86 is the Phosphoserine intermediate of the active site.

The protein belongs to the APS kinase family.

It catalyses the reaction adenosine 5'-phosphosulfate + ATP = 3'-phosphoadenylyl sulfate + ADP + H(+). Its pathway is sulfur metabolism; hydrogen sulfide biosynthesis; sulfite from sulfate: step 2/3. Catalyzes the synthesis of activated sulfate. The protein is Adenylyl-sulfate kinase of Synechococcus sp. (strain JA-2-3B'a(2-13)) (Cyanobacteria bacterium Yellowstone B-Prime).